The sequence spans 324 residues: Methionyl-tRNA formyltransferase (324 aa).

109-112 serves as a coordination point for (6S)-5,6,7,8-tetrahydrofolate; the sequence is SILP.

Belongs to the Fmt family.

The catalysed reaction is L-methionyl-tRNA(fMet) + (6R)-10-formyltetrahydrofolate = N-formyl-L-methionyl-tRNA(fMet) + (6S)-5,6,7,8-tetrahydrofolate + H(+). In terms of biological role, attaches a formyl group to the free amino group of methionyl-tRNA(fMet). The formyl group appears to play a dual role in the initiator identity of N-formylmethionyl-tRNA by promoting its recognition by IF2 and preventing the misappropriation of this tRNA by the elongation apparatus. This Acidothermus cellulolyticus (strain ATCC 43068 / DSM 8971 / 11B) protein is Methionyl-tRNA formyltransferase.